We begin with the raw amino-acid sequence, 239 residues long: tRNA uridine(34) hydroxylase (239 aa).

Residues 124–214 (QGRELVMLDT…GILKYFEETD (91 aa)) form the Rhodanese domain. Cysteine 178 functions as the Cysteine persulfide intermediate in the catalytic mechanism.

This sequence belongs to the TrhO family.

The catalysed reaction is uridine(34) in tRNA + AH2 + O2 = 5-hydroxyuridine(34) in tRNA + A + H2O. In terms of biological role, catalyzes oxygen-dependent 5-hydroxyuridine (ho5U) modification at position 34 in tRNAs. In Bordetella parapertussis (strain 12822 / ATCC BAA-587 / NCTC 13253), this protein is tRNA uridine(34) hydroxylase.